The following is a 477-amino-acid chain: Cysteine protease ATG4b (477 aa).

Residues 11–39 (SKCSSSSTSEKRDISSPTSLVSDSASSDN) are disordered. Residues 25 to 39 (SSPTSLVSDSASSDN) show a composition bias toward polar residues. Cysteine 173 (nucleophile) is an active-site residue. Residues aspartate 368 and histidine 370 contribute to the active site. The disordered stretch occupies residues 453–477 (AETSSSTETSTEISGEEHEDDWQLL). Residues 454 to 465 (ETSSSTETSTEI) show a composition bias toward low complexity.

This sequence belongs to the peptidase C54 family. Interacts with ATG8a and ATG8d. In terms of tissue distribution, constitutively expressed.

The protein resides in the cytoplasm. It catalyses the reaction [protein]-C-terminal L-amino acid-glycyl-phosphatidylethanolamide + H2O = [protein]-C-terminal L-amino acid-glycine + a 1,2-diacyl-sn-glycero-3-phosphoethanolamine. In terms of biological role, cysteine protease that plays a key role in autophagy by mediating both proteolytic activation and delipidation of ATG8 family proteins. The protease activity is required for proteolytic activation of ATG8 family proteins: cleaves the C-terminal amino acid of ATG8 proteins to reveal a C-terminal glycine. Exposure of the glycine at the C-terminus is essential for ATG8 proteins conjugation to phosphatidylethanolamine (PE) and insertion to membranes, which is necessary for autophagy. In addition to the protease activity, also mediates delipidation of PE-conjugated ATG8 proteins. This Arabidopsis thaliana (Mouse-ear cress) protein is Cysteine protease ATG4b.